Here is a 535-residue protein sequence, read N- to C-terminus: uncharacterized protein (535 aa).

6 WD repeats span residues Arg-189 to Leu-226, Glu-228 to Ser-267, His-269 to Val-314, Ala-320 to Tyr-359, Gln-362 to Glu-404, and Val-462 to Asn-505.

This sequence belongs to the WD repeat CDC20/Fizzy family.

This is an uncharacterized protein from Schizosaccharomyces pombe (strain 972 / ATCC 24843) (Fission yeast).